The following is a 175-amino-acid chain: Large ribosomal subunit protein uL10 (175 aa).

Belongs to the universal ribosomal protein uL10 family. As to quaternary structure, part of the ribosomal stalk of the 50S ribosomal subunit. The N-terminus interacts with L11 and the large rRNA to form the base of the stalk. The C-terminus forms an elongated spine to which L12 dimers bind in a sequential fashion forming a multimeric L10(L12)X complex.

Forms part of the ribosomal stalk, playing a central role in the interaction of the ribosome with GTP-bound translation factors. The polypeptide is Large ribosomal subunit protein uL10 (Picosynechococcus sp. (strain ATCC 27264 / PCC 7002 / PR-6) (Agmenellum quadruplicatum)).